The sequence spans 219 residues: DAN domain family member 5 (219 aa).

The signal sequence occupies residues 1-19 (MLLFRAASLLPLLCFTVGA). 4 disulfides stabilise this stretch: Cys-118/Cys-165, Cys-132/Cys-179, Cys-142/Cys-195, and Cys-146/Cys-197. One can recognise a CTCK domain in the interval 118 to 198 (CHALPFIQNV…VELVEECECE (81 aa)).

Belongs to the DAN family. In terms of assembly, interacts with nr1-a.

The protein localises to the secreted. Plays an important role in regulating the left-right axis by blocking a tgfb1 cascade in the right posterior paraxial mesoderm. Functions as an inhibitor of bmp, tgfb1, nodal, activin and wnt signaling in the ectoderm. May inhibit mesodermal signals, probably through an inhibition of nodal/activin pathways. Seems to regulates cell fate specification and competence before the onset of neural induction. Expression in the entire ectodermal region prior to gastrulation might act to prevent fate specification in the ectoderm and ensure the maintenance of the stem-cell-like properties exhibited by ectodermal cells. This chain is DAN domain family member 5 (dand5), found in Xenopus tropicalis (Western clawed frog).